The sequence spans 867 residues: Nuclear cap-binding protein subunit 1 (867 aa).

In terms of domain architecture, MIF4G spans 9–228 (LLRIGDRCPE…DLWERIQVLS (220 aa)). The interval 752–797 (SADGDVPNLRAGDPNVNSSARDPEATTMEIDNENGGDNDSQLNGQN) is disordered. Residues 788 to 797 (DNDSQLNGQN) are compositionally biased toward polar residues.

Belongs to the NCBP1 family. As to quaternary structure, component of the nuclear cap-binding complex (CBC), a heterodimer composed of ABH1/CBP80 and CBP20 that interacts with m7GpppG-capped RNA.

It localises to the nucleus. The protein resides in the cytoplasm. Its function is as follows. Component of the cap-binding complex (CBC), which binds cotranscriptionally to the 5'-cap of pre-mRNAs and is involved in various processes such as pre-mRNA splicing and RNA-mediated gene silencing (RNAi) by microRNAs (miRNAs). The CBC complex is involved in miRNA-mediated RNA interference and is required for primary miRNA processing. In the CBC complex, ABH1/CBP80 does not bind directly capped RNAs (m7GpppG-capped RNA) but is required to stabilize the movement of the N-terminal loop of CBP20 and lock the CBC into a high affinity cap-binding state with the cap structure. The chain is Nuclear cap-binding protein subunit 1 (ABH1) from Oryza sativa subsp. japonica (Rice).